Here is a 341-residue protein sequence, read N- to C-terminus: Protein-glutamate methylesterase/protein-glutamine glutaminase 2 (341 aa).

In terms of domain architecture, Response regulatory spans 11-126; the sequence is RVLVADDSEL…DLGEYGRLIR (116 aa). At Asp-62 the chain carries 4-aspartylphosphate. One can recognise a CheB-type methylesterase domain in the interval 152–341; sequence PARAARVEVV…IPRALRELTR (190 aa). Residues Ser-166, His-193, and Asp-285 contribute to the active site.

Belongs to the CheB family. Phosphorylated by CheA. Phosphorylation of the N-terminal regulatory domain activates the methylesterase activity.

It is found in the cytoplasm. It carries out the reaction [protein]-L-glutamate 5-O-methyl ester + H2O = L-glutamyl-[protein] + methanol + H(+). The catalysed reaction is L-glutaminyl-[protein] + H2O = L-glutamyl-[protein] + NH4(+). Functionally, involved in chemotaxis. Part of a chemotaxis signal transduction system that modulates chemotaxis in response to various stimuli. Catalyzes the demethylation of specific methylglutamate residues introduced into the chemoreceptors (methyl-accepting chemotaxis proteins or MCP) by CheR. Also mediates the irreversible deamidation of specific glutamine residues to glutamic acid. In Anaeromyxobacter dehalogenans (strain 2CP-C), this protein is Protein-glutamate methylesterase/protein-glutamine glutaminase 2.